Reading from the N-terminus, the 163-residue chain is Acetolactate synthase small subunit (163 aa).

The ACT domain occupies 4-79 (ILSVLLENES…VFKVVNLSEQ (76 aa)).

Belongs to the acetolactate synthase small subunit family. Dimer of large and small chains.

It carries out the reaction 2 pyruvate + H(+) = (2S)-2-acetolactate + CO2. It functions in the pathway amino-acid biosynthesis; L-isoleucine biosynthesis; L-isoleucine from 2-oxobutanoate: step 1/4. Its pathway is amino-acid biosynthesis; L-valine biosynthesis; L-valine from pyruvate: step 1/4. The polypeptide is Acetolactate synthase small subunit (ilvH) (Haemophilus influenzae (strain ATCC 51907 / DSM 11121 / KW20 / Rd)).